The primary structure comprises 379 residues: Dihydroorotate dehydrogenase (quinone) (379 aa).

FMN-binding positions include A79 to K83 and A103. Residue K83 participates in substrate binding. N128 to G131 contacts substrate. 2 residues coordinate FMN: N160 and N193. N193 is a substrate binding site. The active-site Nucleophile is S196. N198 is a substrate binding site. K231 and T259 together coordinate FMN. N260–T261 serves as a coordination point for substrate. Residues G289, G318, and Y339 to T340 contribute to the FMN site.

This sequence belongs to the dihydroorotate dehydrogenase family. Type 2 subfamily. As to quaternary structure, monomer. It depends on FMN as a cofactor.

It localises to the cell membrane. It carries out the reaction (S)-dihydroorotate + a quinone = orotate + a quinol. Its pathway is pyrimidine metabolism; UMP biosynthesis via de novo pathway; orotate from (S)-dihydroorotate (quinone route): step 1/1. Catalyzes the conversion of dihydroorotate to orotate with quinone as electron acceptor. The protein is Dihydroorotate dehydrogenase (quinone) of Crocosphaera subtropica (strain ATCC 51142 / BH68) (Cyanothece sp. (strain ATCC 51142)).